The primary structure comprises 807 residues: Spondin-1 (807 aa).

The first 28 residues, 1–28, serve as a signal peptide directing secretion; sequence MRLSPVSLRLSRGPALLALALPLAAALA. Residues 29 to 194 enclose the Reelin domain; that stretch reads FSDETLDKVT…DPTLDGVTDR (166 aa). Cystine bridges form between C44–C128, C156–C182, C199–C336, C200–C340, C202–C415, C443–C480, C454–C489, C459–C494, C502–C538, C513–C517, C548–C554, C559–C595, C570–C574, C605–C610, C615–C650, C626–C630, and C660–C665. Residues 195–388 enclose the Spondin domain; it reads PILDCCACGT…LTSLDHPQSP (194 aa). N214 carries an N-linked (GlcNAc...) asparagine glycan. Ca(2+)-binding residues include D325, D354, and D358. TSP type-1 domains follow at residues 442–495, 501–555, 558–611, 614–666, and 668–721; these read TCIY…PGCS, TCTM…EECS, SCLV…PECH, PCLL…PECP, and DCEL…RKCL. N681 carries N-linked (GlcNAc...) asparagine glycosylation. Positions 732 to 746 are enriched in basic and acidic residues; sequence REARESRRSEQLREE. Residues 732-752 are disordered; the sequence is REARESRRSEQLREESDGEQF. The TSP type-1 6 domain occupies 754–806; it reads GCRMRPWTAWSECTKLCGGGIQERYMTVKKRFKSSQFTSCKDKKEIRACNVHP.

As to quaternary structure, binds to the central extracellular domain of APP and inhibits beta-secretase cleavage of APP.

It localises to the secreted. The protein resides in the extracellular space. It is found in the extracellular matrix. Functionally, cell adhesion protein that promotes the attachment of spinal cord and sensory neuron cells and the outgrowth of neurites in vitro. May contribute to the growth and guidance of axons in both the spinal cord and the PNS. In Mus musculus (Mouse), this protein is Spondin-1 (Spon1).